The primary structure comprises 602 residues: Isocitrate dehydrogenase kinase/phosphatase (602 aa).

ATP contacts are provided by residues 325 to 331 (APGIKGM) and Lys-346. Residue Asp-381 is part of the active site.

This sequence belongs to the AceK family.

The protein resides in the cytoplasm. It catalyses the reaction L-seryl-[isocitrate dehydrogenase] + ATP = O-phospho-L-seryl-[isocitrate dehydrogenase] + ADP + H(+). Functionally, bifunctional enzyme which can phosphorylate or dephosphorylate isocitrate dehydrogenase (IDH) on a specific serine residue. This is a regulatory mechanism which enables bacteria to bypass the Krebs cycle via the glyoxylate shunt in response to the source of carbon. When bacteria are grown on glucose, IDH is fully active and unphosphorylated, but when grown on acetate or ethanol, the activity of IDH declines drastically concomitant with its phosphorylation. This is Isocitrate dehydrogenase kinase/phosphatase from Paracidovorax citrulli (strain AAC00-1) (Acidovorax citrulli).